The chain runs to 509 residues: Pentatricopeptide repeat-containing protein At2g13420, mitochondrial (509 aa).

Residues 1–19 constitute a mitochondrion transit peptide; that stretch reads MLLLKQISPPFHLHQLRRR. PPR repeat units follow at residues 172–202, 206–240, 241–285, 286–320, 321–355, 356–390, 391–425, and 426–460; these read RLVE…RKEE, DEKV…GIEP, NVVT…GIEP, DVTS…GISP, TIET…GISP, SSAT…LCKP, STQT…ETGP, and DLDS…GFLP.

This sequence belongs to the PPR family. P subfamily.

It localises to the mitochondrion. The polypeptide is Pentatricopeptide repeat-containing protein At2g13420, mitochondrial (Arabidopsis thaliana (Mouse-ear cress)).